Reading from the N-terminus, the 200-residue chain is Large ribosomal subunit protein bL25 (200 aa).

This sequence belongs to the bacterial ribosomal protein bL25 family. CTC subfamily. In terms of assembly, part of the 50S ribosomal subunit; part of the 5S rRNA/L5/L18/L25 subcomplex. Contacts the 5S rRNA. Binds to the 5S rRNA independently of L5 and L18.

Its function is as follows. This is one of the proteins that binds to the 5S RNA in the ribosome where it forms part of the central protuberance. The sequence is that of Large ribosomal subunit protein bL25 from Corynebacterium glutamicum (strain ATCC 13032 / DSM 20300 / JCM 1318 / BCRC 11384 / CCUG 27702 / LMG 3730 / NBRC 12168 / NCIMB 10025 / NRRL B-2784 / 534).